Here is an 882-residue protein sequence, read N- to C-terminus: DNA mismatch repair protein MutS (882 aa).

627 to 634 (GPNMAGKS) provides a ligand contact to ATP.

It belongs to the DNA mismatch repair MutS family.

This protein is involved in the repair of mismatches in DNA. It is possible that it carries out the mismatch recognition step. This protein has a weak ATPase activity. This Anaeromyxobacter dehalogenans (strain 2CP-1 / ATCC BAA-258) protein is DNA mismatch repair protein MutS.